Here is a 160-residue protein sequence, read N- to C-terminus: Small ribosomal subunit protein uS7 (160 aa).

It belongs to the universal ribosomal protein uS7 family. As to quaternary structure, part of the 30S ribosomal subunit. Contacts proteins S9 and S11.

In terms of biological role, one of the primary rRNA binding proteins, it binds directly to 16S rRNA where it nucleates assembly of the head domain of the 30S subunit. Is located at the subunit interface close to the decoding center, probably blocks exit of the E-site tRNA. The chain is Small ribosomal subunit protein uS7 from Rickettsia rickettsii (strain Iowa).